Here is a 264-residue protein sequence, read N- to C-terminus: Somatomedin-B and thrombospondin type-1 domain-containing protein (264 aa).

An N-terminal signal peptide occupies residues 1–20 (MKTLWMVLCALARLWPGALA). The SMB domain maps to 24–75 (EAGRCCPGRDPACFARGWRLDRVYGTCFCDQACRLTGDCCFDYDRACPARPC). Cystine bridges form between Cys28/Cys36, Cys28/Cys52, Cys36/Cys70, Cys50/Cys52, Cys50/Cys63, Cys56/Cys62, and Cys63/Cys70. One can recognise a TSP type-1 domain in the interval 74 to 125 (PCFVGEWSPWSGCAGQCQPTTRVRRRSVRQEPLNGGAPCPPLEERAGCLEYS). Asn227 is a glycosylation site (N-linked (GlcNAc...) asparagine).

This sequence belongs to the thrombospondin family.

It is found in the secreted. Its subcellular location is the extracellular space. The protein localises to the extracellular matrix. The sequence is that of Somatomedin-B and thrombospondin type-1 domain-containing protein (Sbspon) from Mus musculus (Mouse).